The primary structure comprises 178 residues: Large ribosomal subunit protein uL6 (178 aa).

Belongs to the universal ribosomal protein uL6 family. In terms of assembly, part of the 50S ribosomal subunit.

Its function is as follows. This protein binds to the 23S rRNA, and is important in its secondary structure. It is located near the subunit interface in the base of the L7/L12 stalk, and near the tRNA binding site of the peptidyltransferase center. The protein is Large ribosomal subunit protein uL6 of Gluconobacter oxydans (strain 621H) (Gluconobacter suboxydans).